The primary structure comprises 1096 residues: Protein EMBRYONIC FLOWER 1 (1096 aa).

Disordered stretches follow at residues 155-189 (KARG…EKLN), 274-296 (KTSG…VRGR), 315-348 (GATS…KGKQ), 366-420 (ETSQ…KKPV), 563-612 (LSRV…DIPM), 629-651 (DKEE…KNAL), 1007-1032 (DKEK…KNSS), and 1070-1096 (FKKK…TQNA). 2 short sequence motifs (nuclear localization signal) span residues 170 to 177 (SRKLVSPE) and 281 to 288 (IRKEESAL). Basic and acidic residues predominate over residues 281 to 294 (IRKEESALKKESVR). Polar residues predominate over residues 315-337 (GATSENASKSCDSDQGNSESTDS). Positions 337–617 (SGFDRTPFKG…DDIPMEIVEL (281 aa)) are DNA-binding. Residues 371–381 (GIKEHDADPSK) are compositionally biased toward basic and acidic residues. The segment covering 382-394 (RSTPAHSLFTGND) has biased composition (polar residues). The span at 572–601 (SGADRKGKTVMVQEHHGAPRSQSHDRKETT) shows a compositional bias: basic and acidic residues. A DNA-binding region spans residues 866-1096 (LDPRLRSTTP…KPVCPPTQNA (231 aa)). Residues 1018-1032 (SCNNNASAGPVKNSS) are compositionally biased toward polar residues. The Nuclear localization signal 3 motif lies at 1071–1078 (KKKPAVCK).

In terms of assembly, interacts with MSI1. Expressed in mature embryo, root tips, cotyledons, leaves, stems, shoot apex, and flower clusters, with highest levels in flowers. The presence in the shoot apical meristem (SAM) is required to maintain vegetative development and prevent early flowering.

The protein resides in the nucleus. Functionally, transcription repressor that regulates phase transition during shoot, flower and seeds development. Controls leaves development, shoot architecture and flowering by delaying both the vegetative to reproductive transition and flower initiation. Participates in polycomb group (PcG) protein complex-mediated (including EMF2) silencing of the flower homeotic genes AGAMOUS (AG), PISTILLATA (PI), and APETALA3 (AP3), as well as of some regulatory genes such as ABSCISIC ACID INSENSITIVE3 (ABI3), LONG VEGETATIVE PHASE1 (LOV1), and FLOWERING LOCUS C (FLC) during vegetative development. Required for histone methylation or for maintaining a stable histone methylation (e.g. H3K27me3) pattern of repressed target genes (including genes involved in salt stress response and flower development); this repression is counteracted by ULT1. Can bind non specifically DNA (both double- and single-stranded) and RNA. The polypeptide is Protein EMBRYONIC FLOWER 1 (Arabidopsis thaliana (Mouse-ear cress)).